The following is a 248-amino-acid chain: 2,3-bisphosphoglycerate-dependent phosphoglycerate mutase (248 aa).

Residues Arg8–Asn15, Thr21–Gly22, Arg60, Glu87–Tyr90, Lys98, Arg114–Arg115, and Gly183–Asn184 each bind substrate. His9 functions as the Tele-phosphohistidine intermediate in the catalytic mechanism. The active-site Proton donor/acceptor is Glu87.

Belongs to the phosphoglycerate mutase family. BPG-dependent PGAM subfamily.

It catalyses the reaction (2R)-2-phosphoglycerate = (2R)-3-phosphoglycerate. It participates in carbohydrate degradation; glycolysis; pyruvate from D-glyceraldehyde 3-phosphate: step 3/5. Its function is as follows. Catalyzes the interconversion of 2-phosphoglycerate and 3-phosphoglycerate. This chain is 2,3-bisphosphoglycerate-dependent phosphoglycerate mutase, found in Borreliella afzelii (strain PKo) (Borrelia afzelii).